Reading from the N-terminus, the 343-residue chain is Transmembrane protein 120A (343 aa).

Topologically, residues 1–132 are cytoplasmic; sequence MQPPPPGPLG…KQAKFAYKDE (132 aa). Residue Lys130 participates in CoA binding. Residues 133-152 traverse the membrane as a helical segment; the sequence is YEKFKLYLTIILILISFTCR. The Extracellular segment spans residues 153–158; sequence FLLNSR. The helical transmembrane segment at 159–177 threads the bilayer; it reads VTDAAFNFLLVWYYCTLTI. Residues 178–190 are Cytoplasmic-facing; that stretch reads RESILINNGSRIK. CoA-binding residues include Ser187 and Arg188. The chain crosses the membrane as a helical span at residues 191 to 209; it reads GWWVFHHYVSTFLSGVMLT. Over 210-218 the chain is Extracellular; sequence WPDGLMYQK. Residues 219 to 240 traverse the membrane as a helical segment; it reads FRNQFLSFSMYQSFVQFLQYYY. The CoA site is built by Gln237, Tyr240, Gln241, and His283. Residues 241-270 are Cytoplasmic-facing; that stretch reads QSGCLYRLRALGERHTMDLTVEGFQSWMWR. Residues 271–294 traverse the membrane as a helical segment; it reads GLTFLLPFLFFGHFWQLFNALTLF. The Extracellular portion of the chain corresponds to 295–304; that stretch reads NLAQDPQCKE. A helical membrane pass occupies residues 305 to 330; the sequence is WQVLMCGFPFLLLFLGNFFTTLRVVH. Residues 331–343 are Cytoplasmic-facing; it reads HKFHSQRHGSKKD. Lys332 provides a ligand contact to CoA.

Belongs to the TMEM120 family. As to quaternary structure, homodimer. Forms heterooligomer with TMEM120B. Interacts with PKD2; TMEM120A inhibits PKD2 channel activity through the physical association of PKD2 with TMEM120A. Interacts (via C-terminal domain) with STING1; regulates the trafficking of STING1 from the ER to the ER-Golgi intermediate compartment to elicit antiviral effects. As to expression, expressed in nociceptors.

Its subcellular location is the cell membrane. The protein localises to the nucleus inner membrane. It localises to the endoplasmic reticulum. Multifunctional protein involved in mechanosensation, and plays an essential role in lipid metabolism and adipocyte differentiation. May function as a potential ion channel involved in sensing mechanical stimuli. Mediates the mechanosensitivity of the PKD2-TMEM120A channel complex through direct physical interaction. TMEM120A seems to affect mechanosensation by inhibiting PIEZO2 channels, possibly by altering cellular lipid content. TMEM120A is structurally similar to a lipid-modifying enzyme, ELOVL7, and contains a bound coenzyme A molecule, which suggests it might function as an enzyme in lipid metabolism. Additionnaly, implicated in innate immune response against Zika virus. Acts as a key activator of the antiviral signaling involving STING1. This is Transmembrane protein 120A from Homo sapiens (Human).